The primary structure comprises 256 residues: Pimeloyl-[acyl-carrier protein] methyl ester esterase (256 aa).

The 228-residue stretch at 15 to 242 (HLVLLHGWGL…AAHAPFISHP (228 aa)) folds into the AB hydrolase-1 domain. Residues tryptophan 22, 82–83 (SL), and 143–147 (FLALQ) each bind substrate. Serine 82 acts as the Nucleophile in catalysis. Residues aspartate 207 and histidine 235 contribute to the active site. Substrate is bound at residue histidine 235.

This sequence belongs to the AB hydrolase superfamily. Carboxylesterase BioH family. In terms of assembly, monomer.

It is found in the cytoplasm. The catalysed reaction is 6-carboxyhexanoyl-[ACP] methyl ester + H2O = 6-carboxyhexanoyl-[ACP] + methanol + H(+). Its pathway is cofactor biosynthesis; biotin biosynthesis. In terms of biological role, the physiological role of BioH is to remove the methyl group introduced by BioC when the pimeloyl moiety is complete. It allows to synthesize pimeloyl-ACP via the fatty acid synthetic pathway through the hydrolysis of the ester bonds of pimeloyl-ACP esters. In Shigella boydii serotype 4 (strain Sb227), this protein is Pimeloyl-[acyl-carrier protein] methyl ester esterase.